The chain runs to 206 residues: MAAALLRELGALWVPNLRIWTTQMLRVLPQSCIHTSTSLDISRRWEKKNKIVYPPQLPGEPRRPAEIYHCRRQIKYSKDKMWYLAKLIRGMSIDQALAQLEFNDKKGAQIIKEVLLEAQDMAVRDHNVEFRSNLHIAESTSGRGQCLKRIRYHGRGRFGIMEKVYCHYFVKLVEGPPPRPEAPRTAVDHAKEYIQQLRSRTIIHTL.

A mitochondrion-targeting transit peptide spans 1–40 (MAAALLRELGALWVPNLRIWTTQMLRVLPQSCIHTSTSLD).

Belongs to the universal ribosomal protein uL22 family. Component of the mitochondrial ribosome large subunit (39S) which comprises a 16S rRNA and about 50 distinct proteins.

The protein resides in the mitochondrion. This Rattus norvegicus (Rat) protein is Large ribosomal subunit protein uL22m (Mrpl22).